A 542-amino-acid polypeptide reads, in one-letter code: MPRYIFITGGVVSSLGKGLASAAIGALLQARGYKVRLRKLDPYLNVDPGTMSPYQHGECYVTDDGAEADLDLGHYERFTGVPASQADNITTGRIYSRIIERERRGDYLGATVQVIPHVTDQIKQFVLSDAGDVDFVLCEIGGTVGDIEGLPFFEAIRQLGQELGEGNAVFLHVTLLPFIKVAGEMKTKPTQHSVKELRSIGIQPDILLCRCEIPIPPGDKRKIGLFCNVKESAVIEGRDAASLYDVPLEYHSQGLDTEILRCFGIDDAPAPDLSRWQGISETIANPDGEVTIGVVGKYVGLLDAYKSLIEALAHGGIANGVKVKLKWLDSEQFEKDDPFEPLEDVHGVLVPGGFGERGVEGKIAAARFARERKVPFFGICYGMQMAVLEAARNLAGVTDAVSTEFSDTGESVIGLLTEWTRGNEVETRKVGDDMGGTMRLGAYPAVLKDGSKVREIYGQAHIEERHRHRYEVNVGYKDRLEACGLTFSGLSPDGVLPEIVEIEDHPWFIGVQFHPELKSRPFEPHPLFASFIAAALHQSRMV.

The segment at 1–265 (MPRYIFITGG…DTEILRCFGI (265 aa)) is amidoligase domain. A CTP-binding site is contributed by Ser13. Ser13 is a UTP binding site. 14–19 (SLGKGL) contributes to the ATP binding site. Tyr54 is a binding site for L-glutamine. Asp71 contacts ATP. Mg(2+)-binding residues include Asp71 and Glu139. CTP is bound by residues 146–148 (DIE), 186–191 (KTKPTQ), and Lys222. Residues 186-191 (KTKPTQ) and Lys222 contribute to the UTP site. Residue 238 to 240 (RDA) coordinates ATP. Residues 298 to 541 (YVGLLDAYKS…IAAALHQSRM (244 aa)) enclose the Glutamine amidotransferase type-1 domain. Gly353 provides a ligand contact to L-glutamine. Cys380 acts as the Nucleophile; for glutamine hydrolysis in catalysis. L-glutamine-binding positions include 381–384 (YGMQ), Glu404, and Arg469. Active-site residues include His514 and Glu516.

It belongs to the CTP synthase family. Homotetramer.

The catalysed reaction is UTP + L-glutamine + ATP + H2O = CTP + L-glutamate + ADP + phosphate + 2 H(+). It catalyses the reaction L-glutamine + H2O = L-glutamate + NH4(+). It carries out the reaction UTP + NH4(+) + ATP = CTP + ADP + phosphate + 2 H(+). It participates in pyrimidine metabolism; CTP biosynthesis via de novo pathway; CTP from UDP: step 2/2. With respect to regulation, allosterically activated by GTP, when glutamine is the substrate; GTP has no effect on the reaction when ammonia is the substrate. The allosteric effector GTP functions by stabilizing the protein conformation that binds the tetrahedral intermediate(s) formed during glutamine hydrolysis. Inhibited by the product CTP, via allosteric rather than competitive inhibition. Functionally, catalyzes the ATP-dependent amination of UTP to CTP with either L-glutamine or ammonia as the source of nitrogen. Regulates intracellular CTP levels through interactions with the four ribonucleotide triphosphates. The chain is CTP synthase from Maricaulis maris (strain MCS10) (Caulobacter maris).